Consider the following 432-residue polypeptide: Gamma-glutamyl phosphate reductase (432 aa).

The protein belongs to the gamma-glutamyl phosphate reductase family.

The protein localises to the cytoplasm. The enzyme catalyses L-glutamate 5-semialdehyde + phosphate + NADP(+) = L-glutamyl 5-phosphate + NADPH + H(+). It functions in the pathway amino-acid biosynthesis; L-proline biosynthesis; L-glutamate 5-semialdehyde from L-glutamate: step 2/2. Catalyzes the NADPH-dependent reduction of L-glutamate 5-phosphate into L-glutamate 5-semialdehyde and phosphate. The product spontaneously undergoes cyclization to form 1-pyrroline-5-carboxylate. The sequence is that of Gamma-glutamyl phosphate reductase from Kineococcus radiotolerans (strain ATCC BAA-149 / DSM 14245 / SRS30216).